The primary structure comprises 601 residues: Potassium-transporting ATPase potassium-binding subunit (601 aa).

A run of 12 helical transmembrane segments spans residues 3-23 (ASAWGLLALFLSVLGLLAWPL), 62-82 (HYALALLAFNALGVFAVYALQ), 132-152 (LGLSVQNFLSAATGIAVAFAL), 179-199 (AWVLVPLSFVLAVFLAGQGVI), 283-303 (LTNLAQMLAIFLVPAALCFAF), 314-334 (VAILAAMTLMFVVAVVAVTAA), 367-387 (FGISASALFAAVTTAASCGAV), 397-417 (LGGMVPMVLMQLGEVVFGGAG), 419-439 (GLYGMLVFAILAVFIAGLMIG), 459-479 (VAILVTPLLVLVGTAVAVLAP), 523-543 (VLLALAMWFGRFGVIVPVLAI), and 564-584 (GPLFVALLVFTVLLVGLLNYV).

Belongs to the KdpA family. The system is composed of three essential subunits: KdpA, KdpB and KdpC.

It is found in the cell inner membrane. In terms of biological role, part of the high-affinity ATP-driven potassium transport (or Kdp) system, which catalyzes the hydrolysis of ATP coupled with the electrogenic transport of potassium into the cytoplasm. This subunit binds the periplasmic potassium ions and delivers the ions to the membrane domain of KdpB through an intramembrane tunnel. In Paracidovorax citrulli (strain AAC00-1) (Acidovorax citrulli), this protein is Potassium-transporting ATPase potassium-binding subunit.